Here is a 62-residue protein sequence, read N- to C-terminus: Sperm protamine P1 (62 aa).

The interval 1–62 (MARYRRHSRS…RYSRRGRRRY (62 aa)) is disordered.

This sequence belongs to the protamine P1 family. Testis.

The protein localises to the nucleus. It localises to the chromosome. Functionally, protamines substitute for histones in the chromatin of sperm during the haploid phase of spermatogenesis. They compact sperm DNA into a highly condensed, stable and inactive complex. In Antechinomys laniger (Eastern jerboa marsupial), this protein is Sperm protamine P1 (PRM1).